The sequence spans 234 residues: (5-formylfuran-3-yl)methyl phosphate synthase (234 aa).

Catalysis depends on Lys27, which acts as the Schiff-base intermediate with substrate. Lys85 functions as the Proton acceptor in the catalytic mechanism.

Belongs to the MfnB family.

The catalysed reaction is 2 D-glyceraldehyde 3-phosphate = 4-(hydroxymethyl)-2-furancarboxaldehyde phosphate + phosphate + 2 H2O. Its pathway is cofactor biosynthesis; methanofuran biosynthesis. Catalyzes the formation of 4-(hydroxymethyl)-2-furancarboxaldehyde phosphate (4-HFC-P) from two molecules of glyceraldehyde-3-P (GA-3-P). The sequence is that of (5-formylfuran-3-yl)methyl phosphate synthase from Methanosarcina acetivorans (strain ATCC 35395 / DSM 2834 / JCM 12185 / C2A).